An 82-amino-acid polypeptide reads, in one-letter code: Small ribosomal subunit protein bS20 (82 aa).

Over residues 1–11 (MANHKSALKRI) the composition is skewed to basic residues. The tract at residues 1–20 (MANHKSALKRIRSNETKRLR) is disordered.

The protein belongs to the bacterial ribosomal protein bS20 family.

Binds directly to 16S ribosomal RNA. The polypeptide is Small ribosomal subunit protein bS20 (Christiangramia forsetii (strain DSM 17595 / CGMCC 1.15422 / KT0803) (Gramella forsetii)).